We begin with the raw amino-acid sequence, 149 residues long: D-aminoacyl-tRNA deacylase (149 aa).

Residues Gly137–Pro138 carry the Gly-cisPro motif, important for rejection of L-amino acids motif.

This sequence belongs to the DTD family. As to quaternary structure, homodimer.

It is found in the cytoplasm. It catalyses the reaction glycyl-tRNA(Ala) + H2O = tRNA(Ala) + glycine + H(+). The catalysed reaction is a D-aminoacyl-tRNA + H2O = a tRNA + a D-alpha-amino acid + H(+). In terms of biological role, an aminoacyl-tRNA editing enzyme that deacylates mischarged D-aminoacyl-tRNAs. Also deacylates mischarged glycyl-tRNA(Ala), protecting cells against glycine mischarging by AlaRS. Acts via tRNA-based rather than protein-based catalysis; rejects L-amino acids rather than detecting D-amino acids in the active site. By recycling D-aminoacyl-tRNA to D-amino acids and free tRNA molecules, this enzyme counteracts the toxicity associated with the formation of D-aminoacyl-tRNA entities in vivo and helps enforce protein L-homochirality. This is D-aminoacyl-tRNA deacylase from Clostridioides difficile (strain 630) (Peptoclostridium difficile).